A 361-amino-acid polypeptide reads, in one-letter code: Chorismate synthase (361 aa).

Positions 48 and 54 each coordinate NADP(+). FMN is bound by residues 125–127 (RSS), 238–239 (NA), Gly278, 293–297 (KPTSS), and Arg319.

It belongs to the chorismate synthase family. In terms of assembly, homotetramer. FMNH2 serves as cofactor.

It catalyses the reaction 5-O-(1-carboxyvinyl)-3-phosphoshikimate = chorismate + phosphate. Its pathway is metabolic intermediate biosynthesis; chorismate biosynthesis; chorismate from D-erythrose 4-phosphate and phosphoenolpyruvate: step 7/7. Functionally, catalyzes the anti-1,4-elimination of the C-3 phosphate and the C-6 proR hydrogen from 5-enolpyruvylshikimate-3-phosphate (EPSP) to yield chorismate, which is the branch point compound that serves as the starting substrate for the three terminal pathways of aromatic amino acid biosynthesis. This reaction introduces a second double bond into the aromatic ring system. This is Chorismate synthase from Salmonella paratyphi A (strain ATCC 9150 / SARB42).